The sequence spans 607 residues: Rap1 GTPase-GDP dissociation stimulator 1 (607 aa).

ARM repeat units follow at residues 89 to 131 and 170 to 211; these read GLIS…DQAG and DSLQ…NLAE. Residues 122-170 form a prevents binding to prenylated RHOA region; the sequence is EGRSAVDQAGGAQIVIDHLRSLCGRTDPASEKLMTVFCGMLMNYSNEND. The residue at position 230 (Lys-230) is an N6-acetyllysine. ARM repeat units lie at residues 347 to 390, 391 to 431, and 479 to 519; these read DGNC…NLAI, PVVN…MLID, and SKDV…LIAA.

As to quaternary structure, interacts with RABL3. Interacts with RHOT1. Interacts with unprenylated RHOA; the interaction is direct. Interacts with RAP1A. Interacts with KRAS. Interacts with RAC1. Interacts with RAP1B. Preferentially interacts with unprenylated GTPases that will become geranylgeranylated. May also interact with prenylated GTPases. In terms of assembly, interacts with prenylated RHOA; the interaction is direct and in a 1:1 stoichiometry. Interacts with RAP1A. Interacts with KRAS. Interacts with RAC1. Interacts with RAP1B. Preferentially interacts with prenylated GTPases. In terms of processing, serotonylated on Gln residues by TGM2 in response to hypoxia, leading to its inactivation.

The protein resides in the cytoplasm. It localises to the cytosol. The protein localises to the endoplasmic reticulum. It is found in the mitochondrion. Its subcellular location is the nucleus. Its function is as follows. Acts as a GEF (guanine nucleotide exchange factor) for the Rho family of small GTP-binding proteins (G proteins) that stimulates the dissociation of GDP to enable subsequent binding of GTP. Additionally, appears to chaperone the processing and/or trafficking of small GTPases containing a C-terminal polybasic region independently of GEF activity. Targets include RAP1A/RAP1B, RHOA, RHOB, RHOC, RAC1 and KRAS. Regulates mitochondrial dynamics by controlling RHOT function to promote mitochondrial fission during high calcium conditions. Able to promote the Ca(2+) release from the endoplasmic reticulum via both inositol trisphosphate (Ins3P) and ryanodine sensitive receptors leading to a enhanced mitochondrial Ca(2+) uptake. In terms of biological role, acts as a GEF (guanine nucleotide exchange factor) for unprenylated RHOA. Chaperones the entry and passage of small GTPases through the prenylation pathway. Recognizes the last amino acid in the GTPase C-terminal CAAX motif with a preference for 'Leu' over 'Met', indicating involvement in the geranylgeranylation pathway. May also recognize prenylated GTPases. Functionally, acts as a GEF (guanine nucleotide exchange factor) for prenylated RHOA. Acts as a GEF for RHOC. Chaperones the downstream trafficking and/or processing of small newly prenylated GTPases. Escorts RAC1 to the nucleus. This Mus musculus (Mouse) protein is Rap1 GTPase-GDP dissociation stimulator 1.